Here is a 123-residue protein sequence, read N- to C-terminus: Small ribosomal subunit protein uS11 (123 aa).

This sequence belongs to the universal ribosomal protein uS11 family. In terms of assembly, part of the 30S ribosomal subunit. Interacts with proteins S7 and S18. Binds to IF-3.

Located on the platform of the 30S subunit, it bridges several disparate RNA helices of the 16S rRNA. Forms part of the Shine-Dalgarno cleft in the 70S ribosome. The polypeptide is Small ribosomal subunit protein uS11 (Coxiella burnetii (strain RSA 331 / Henzerling II)).